Reading from the N-terminus, the 226-residue chain is MTTPQQPHGPLRSFGRLKSRPVKPRQQALLDTLLPEIAVPTGPFQPLDLMPEAKAVWLEIGFGGGEHMASQAGRNPETLVIGAEPFVNGVASAVRHVEEQALKNVRIHEGDARDVVDWLPDACLDRVFIMFPDPWHKARHNKRRLIQPEFVAKLARVMKPGAALRFATDWADYAEWTTERVLADPSFRFADEAADRNAIPADHVTTRYEEKKLGDCAPVFLDFTRG.

The segment at 1-22 is disordered; that stretch reads MTTPQQPHGPLRSFGRLKSRPV. Positions 59, 84, 111, and 133 each coordinate S-adenosyl-L-methionine. Asp-133 is an active-site residue. Lys-137 contacts substrate. The interval 139–144 is interaction with RNA; it reads RHNKRR. Substrate is bound by residues Asp-169 and 206-209; that span reads TRYE.

The protein belongs to the class I-like SAM-binding methyltransferase superfamily. TrmB family.

The enzyme catalyses guanosine(46) in tRNA + S-adenosyl-L-methionine = N(7)-methylguanosine(46) in tRNA + S-adenosyl-L-homocysteine. It participates in tRNA modification; N(7)-methylguanine-tRNA biosynthesis. In terms of biological role, catalyzes the formation of N(7)-methylguanine at position 46 (m7G46) in tRNA. The chain is tRNA (guanine-N(7)-)-methyltransferase from Caulobacter vibrioides (strain ATCC 19089 / CIP 103742 / CB 15) (Caulobacter crescentus).